Here is a 264-residue protein sequence, read N- to C-terminus: Acetyl-coenzyme A carboxylase carboxyl transferase subunit beta (264 aa).

The 261-residue stretch at 4–264 (LWVKCKQCQQ…CGNSLEGVES (261 aa)) folds into the CoA carboxyltransferase N-terminal domain. Zn(2+)-binding residues include cysteine 8, cysteine 11, cysteine 27, and cysteine 29. The C4-type zinc-finger motif lies at 8–29 (CKQCQQILLTKELEKNLKVCRC).

The protein belongs to the AccD/PCCB family. In terms of assembly, acetyl-CoA carboxylase is a heterohexamer composed of biotin carboxyl carrier protein (AccB), biotin carboxylase (AccC) and two subunits each of ACCase subunit alpha (AccA) and ACCase subunit beta (AccD). The cofactor is Zn(2+).

The protein localises to the cytoplasm. The enzyme catalyses N(6)-carboxybiotinyl-L-lysyl-[protein] + acetyl-CoA = N(6)-biotinyl-L-lysyl-[protein] + malonyl-CoA. It functions in the pathway lipid metabolism; malonyl-CoA biosynthesis; malonyl-CoA from acetyl-CoA: step 1/1. In terms of biological role, component of the acetyl coenzyme A carboxylase (ACC) complex. Biotin carboxylase (BC) catalyzes the carboxylation of biotin on its carrier protein (BCCP) and then the CO(2) group is transferred by the transcarboxylase to acetyl-CoA to form malonyl-CoA. This is Acetyl-coenzyme A carboxylase carboxyl transferase subunit beta from Heliobacterium modesticaldum (strain ATCC 51547 / Ice1).